The chain runs to 117 residues: Swarming motility protein SwrAA (117 aa).

It is found in the cytoplasm. In terms of biological role, required for swarm cell differentiation. Plays a crucial role in regulating the degree of cell flagellation. This is Swarming motility protein SwrAA (swrAA) from Bacillus subtilis (strain 168).